Here is a 257-residue protein sequence, read N- to C-terminus: tRNA pseudouridine synthase A (257 aa).

Aspartate 43 serves as the catalytic Nucleophile. Residue tyrosine 94 coordinates substrate.

This sequence belongs to the tRNA pseudouridine synthase TruA family.

It carries out the reaction uridine(38/39/40) in tRNA = pseudouridine(38/39/40) in tRNA. In terms of biological role, formation of pseudouridine at positions 38, 39 and 40 in the anticodon stem and loop of transfer RNAs. The sequence is that of tRNA pseudouridine synthase A from Pyrobaculum calidifontis (strain DSM 21063 / JCM 11548 / VA1).